A 391-amino-acid chain; its full sequence is 3-ketoacyl-CoA thiolase (391 aa).

Cysteine 95 serves as the catalytic Acyl-thioester intermediate. Residues histidine 347 and cysteine 377 each act as proton acceptor in the active site.

Belongs to the thiolase-like superfamily. Thiolase family. In terms of assembly, heterotetramer of two alpha chains (FadB) and two beta chains (FadA).

It localises to the cytoplasm. It catalyses the reaction an acyl-CoA + acetyl-CoA = a 3-oxoacyl-CoA + CoA. Its pathway is lipid metabolism; fatty acid beta-oxidation. Catalyzes the final step of fatty acid oxidation in which acetyl-CoA is released and the CoA ester of a fatty acid two carbons shorter is formed. The sequence is that of 3-ketoacyl-CoA thiolase from Pseudomonas entomophila (strain L48).